The chain runs to 229 residues: Echinolectin 1 (229 aa).

Residue Asn-94 is glycosylated (N-linked (GlcNAc...) asparagine).

Its subcellular location is the secreted. In Echinometra lucunter (Rock-boring urchin), this protein is Echinolectin 1.